The following is a 673-amino-acid chain: MDPQRSPLLEVKGNIELKRPLIKAPSQLPLSGSRLKRRPDQMEDGLEPEKKRTRGLGATTKITTSHPRVPSLTTVPQTQGQTTAQKVSKKTGPRCSTAIATGLKNQKPVPAVPVQKSGTSGVPPMAGGKKPSKRPAWDLKGQLCDLNAELKRCRERTQTLDQENQQLQDQLRDAQQQVKALGTERTTLEGHLAKVQAQAEQGQQELKNLRACVLELEERLSTQEGLVQELQKKQVELQEERRGLMSQLEEKERRLQTSEAALSSSQAEVASLRQETVAQAALLTEREERLHGLEMERRRLHNQLQELKGNIRVFCRVRPVLPGEPTPPPGLLLFPSGPGGPSDPPTRLSLSRSDERRGTLSGAPAPPTRHDFSFDRVFPPGSGQDEVFEEIAMLVQSALDGYPVCIFAYGQTGSGKTFTMEGGPGGDPQLEGLIPRALRHLFSVAQELSGQGWTYSFVASYVEIYNETVRDLLATGTRKGQGGECEIRRAGPGSEELTVTNARYVPVSCEKEVDALLHLARQNRAVARTAQNERSSRSHSVFQLQISGEHSSRGLQCGAPLSLVDLAGSERLDPGLALGPGERERLRETQAINSSLSTLGLVIMALSNKESHVPYRNSKLTYLLQNSLGGSAKMLMFVNISPLEENVSESLNSLRFASKVNQCVIGTAQANRK.

4 positions are modified to phosphoserine: S6, S26, S31, and S33. Disordered regions lie at residues 23–94 and 109–136; these read KAPS…TGPR and VPAVPVQKSGTSGVPPMAGGKKPSKRPA. A compositionally biased stretch (polar residues) spans 60–86; sequence TKITTSHPRVPSLTTVPQTQGQTTAQK. The stretch at 142–306 forms a coiled coil; sequence QLCDLNAELK…RRRLHNQLQE (165 aa). The Kinesin motor domain occupies 310 to 663; it reads NIRVFCRVRP…LRFASKVNQC (354 aa). The segment at 325–372 is disordered; that stretch reads PTPPPGLLLFPSGPGGPSDPPTRLSLSRSDERRGTLSGAPAPPTRHDF. T359 bears the Phosphothreonine mark. 410–417 is a binding site for ATP; it reads GQTGSGKT.

This sequence belongs to the TRAFAC class myosin-kinesin ATPase superfamily. Kinesin family. NCD subfamily. As to quaternary structure, binds NUBP1 and NUBP2. Interacts with PPP1R42.

The protein localises to the nucleus. Its subcellular location is the cytoplasm. It is found in the cytoskeleton. The protein resides in the microtubule organizing center. It localises to the centrosome. The protein localises to the spindle. Its subcellular location is the early endosome. Functionally, minus end-directed microtubule-dependent motor required for bipolar spindle formation. May contribute to movement of early endocytic vesicles. Regulates cilium formation and structure. In Homo sapiens (Human), this protein is Kinesin-like protein KIFC1 (KIFC1).